We begin with the raw amino-acid sequence, 303 residues long: Protein SULFUR DEFICIENCY-INDUCED 2 (303 aa).

The stretch at 62–89 (RVDSALKDMALLMKQQNRAEEAIDAIQS) forms a coiled coil. TPR repeat units lie at residues 64–97 (DSALKDMALLMKQQNRAEEAIDAIQSFRDLCSRQ), 100–133 (ESLDNVLIDLYKKCGRIEEQVELLKQKLWMIYQG), 160–193 (SRILGNLGWAYMQLMDYTAAEAVYRKAQLIEPDA), and 195–226 (KACNLCTCLIKQGKHDEARSILFRDVLMENKE). A coiled-coil region spans residues 232–253 (RLMARVQELLSELKPQEEEAAA).

The protein belongs to the MS5 protein family.

The protein localises to the nucleus. Involved in the utilization of stored sulfate under sulfur-deficient conditions. In Arabidopsis thaliana (Mouse-ear cress), this protein is Protein SULFUR DEFICIENCY-INDUCED 2.